The sequence spans 67 residues: Mitotic-spindle organizing protein 1A (67 aa).

Belongs to the MOZART1 family. As to quaternary structure, part of the gamma-tubulin complex. Interacts with GIP1 and GCP3. Mostly expressed in siliques and flowers, and, to a lower extent, in leaves, roots and seedlings, with highest levels in young tissues, meristematic cells, and the vasculature.

The protein resides in the cytoplasm. It is found in the cytoskeleton. Its subcellular location is the microtubule organizing center. The protein localises to the spindle. It localises to the nucleus. The protein resides in the phragmoplast. It is found in the nucleus envelope. Functionally, required for gamma-tubulin complex recruitment to the microtubule organizing centers (MTOCs). During mitosis, modulates gamma-tubulin complex localization, spindle stability and chromosomal segregation. Necessary for gametophyte development and embryogenesis. In Arabidopsis thaliana (Mouse-ear cress), this protein is Mitotic-spindle organizing protein 1A (GIP2).